The sequence spans 157 residues: 3-hydroxyacyl-[acyl-carrier-protein] dehydratase FabZ (157 aa).

The active site involves His-58.

It belongs to the thioester dehydratase family. FabZ subfamily.

The protein localises to the cytoplasm. The catalysed reaction is a (3R)-hydroxyacyl-[ACP] = a (2E)-enoyl-[ACP] + H2O. Functionally, involved in unsaturated fatty acids biosynthesis. Catalyzes the dehydration of short chain beta-hydroxyacyl-ACPs and long chain saturated and unsaturated beta-hydroxyacyl-ACPs. This is 3-hydroxyacyl-[acyl-carrier-protein] dehydratase FabZ from Rhizorhabdus wittichii (strain DSM 6014 / CCUG 31198 / JCM 15750 / NBRC 105917 / EY 4224 / RW1) (Sphingomonas wittichii).